A 468-amino-acid polypeptide reads, in one-letter code: 6-phospho-beta-galactosidase (468 aa).

D-galactose 6-phosphate is bound by residues Gln19, His116, Asn159, Glu160, and Asn297. The Proton donor role is filled by Glu160. The active-site Nucleophile is the Glu375. The D-galactose 6-phosphate site is built by Ser428, Trp429, Lys435, and Tyr437.

The protein belongs to the glycosyl hydrolase 1 family.

The catalysed reaction is a 6-phospho-beta-D-galactoside + H2O = D-galactose 6-phosphate + an alcohol. Its pathway is carbohydrate metabolism; lactose degradation; D-galactose 6-phosphate and beta-D-glucose from lactose 6-phosphate: step 1/1. This is 6-phospho-beta-galactosidase from Streptococcus uberis (strain ATCC BAA-854 / 0140J).